Consider the following 407-residue polypeptide: Indoleamine 2,3-dioxygenase 2 (407 aa).

His347 contributes to the heme binding site.

It belongs to the indoleamine 2,3-dioxygenase family. Requires heme as cofactor. As to expression, detected in liver, small intestine, spleen, placenta, thymus, lung, brain, kidney, and colon. Also expressed at low level in testis and thyroid. Not expressed in the majority of human tumor samples (&gt;99%).

The catalysed reaction is L-tryptophan + O2 = N-formyl-L-kynurenine. The protein operates within amino-acid degradation; L-tryptophan degradation via kynurenine pathway; L-kynurenine from L-tryptophan: step 1/2. Activity is inhibited by D-1MT (1-methyl-D-tryptophan) and MTH-trp (methylthiohydantoin-DL-tryptophan) but not L-1MT (1-methyl-L-tryptophan). Functionally, catalyzes the first and rate limiting step of the catabolism of the essential amino acid tryptophan along the kynurenine pathway. Involved in immune regulation. May not play a significant role in tryptophan-related tumoral resistance. The chain is Indoleamine 2,3-dioxygenase 2 from Homo sapiens (Human).